Reading from the N-terminus, the 442-residue chain is Elongation factor 1-gamma (442 aa).

The region spanning 2 to 87 is the GST N-terminal domain; sequence AAGTLYTYPE…FLSNDALRGS (86 aa). One can recognise a GST C-terminal domain in the interval 88-216; it reads TPQASAQVLQ…VKLCEKMAQF (129 aa). Basic and acidic residues-rich tracts occupy residues 224–242 and 249–263; these read MQPK…KEGG and QEKK…KAAP. The interval 224–273 is disordered; that stretch reads MQPKKEAPAKKEKAGKEGGKQQQPQQEKKEKKKEEKKAAPAEEEMDECEA. In terms of domain architecture, EF-1-gamma C-terminal spans 281–442; that stretch reads AKDPYAHLPK…KSFNQGKIFK (162 aa).

EF-1 is composed of four subunits: alpha, beta, delta, and gamma.

Its function is as follows. Probably plays a role in anchoring the complex to other cellular components. The protein is Elongation factor 1-gamma (eef1g) of Carassius auratus (Goldfish).